The sequence spans 502 residues: Biotin biosynthesis bifunctional protein BioHC (502 aa).

Residues 1 to 224 (MTRPVLVLVH…IHVIAGSAHA (224 aa)) form a carboxylesterase region. W12 is a binding site for substrate. S72 functions as the Nucleophile in the catalytic mechanism. 134-138 (FTGLL) contributes to the substrate binding site. Catalysis depends on residues D195 and H223. H223 provides a ligand contact to substrate. The segment at 225 to 502 (VHWSQPQQLI…EVYYLVLCKP (278 aa)) is malonyl-ACP O-methyltransferase.

It in the N-terminal section; belongs to the AB hydrolase superfamily. Carboxylesterase BioH family. This sequence in the C-terminal section; belongs to the methyltransferase superfamily.

The catalysed reaction is a carboxylic ester + H2O = an alcohol + a carboxylate + H(+). The enzyme catalyses malonyl-[ACP] + S-adenosyl-L-methionine = malonyl-[ACP] methyl ester + S-adenosyl-L-homocysteine. Its pathway is cofactor biosynthesis; biotin biosynthesis. Converts the free carboxyl group of a malonyl-thioester to its methyl ester by transfer of a methyl group from S-adenosyl-L-methionine (SAM). It allows to synthesize pimeloyl-ACP via the fatty acid synthetic pathway. Its function is as follows. The physiological role of BioH is to remove the methyl group introduced by BioC when the pimeloyl moiety is complete. It allows to synthesize pimeloyl-ACP via the fatty acid synthetic pathway through the hydrolysis of the ester bonds of pimeloyl-ACP esters. This is Biotin biosynthesis bifunctional protein BioHC (bioC) from Cellvibrio japonicus (strain Ueda107) (Pseudomonas fluorescens subsp. cellulosa).